A 496-amino-acid polypeptide reads, in one-letter code: MVKEVVLGIDLGTSAIKIIAVDQLGNVIESVSETLKLYQENPGYSEQDPNEWFEATKKGIKELIQSTEMSDKIVKGISFSGQMHGLVIVDDNGIPLRKAILWNDTRNSIQCRQIEDIYGERLNYNPILEGFTLPKMLWVQQHEPEIWNRVDVFMLPKDYLRYCLTQTIHMEYSDACSTLLFNPENYEWTRDVGDTFNIGDIYPPLVKSHSYVGNVTSSLAKELGLSSDVAVYAGGGDNACGAIGAGVIHDKSALCSIGTSGVVLNVEYQRVTSYDSNLHLFNHSVPDTYYAMGVTLAAGYSLNWLKQTFFENESFEEILNLAASSKMGANGLLFTPYLAGERTPHGDAQIRGSFIGISGQHTKADFARAVIEGITYSLYDSIKIMRRAGHEMNSITSIGGGAKSRFWLQLQADIFNVQIKRLKHEEGPSMGAAILAAYGLGWFKTIESCVEAFIKVDEVFEPNNENHDLYEQYYSVYEAIYKQTKQLTADLLTITN.

Met-83–His-84 lines the substrate pocket. Asp-237 acts as the Proton acceptor in catalysis.

This sequence belongs to the FGGY kinase family.

The enzyme catalyses D-xylulose + ATP = D-xylulose 5-phosphate + ADP + H(+). Its function is as follows. Catalyzes the phosphorylation of D-xylulose to D-xylulose 5-phosphate. In Staphylococcus epidermidis (strain ATCC 35984 / DSM 28319 / BCRC 17069 / CCUG 31568 / BM 3577 / RP62A), this protein is Xylulose kinase.